The primary structure comprises 28 residues: uncharacterized protein (28 aa).

This is an uncharacterized protein from Saccharomyces cerevisiae (strain ATCC 204508 / S288c) (Baker's yeast).